Here is a 110-residue protein sequence, read N- to C-terminus: Large ribosomal subunit protein uL22 (110 aa).

The protein belongs to the universal ribosomal protein uL22 family. Part of the 50S ribosomal subunit.

Its function is as follows. This protein binds specifically to 23S rRNA; its binding is stimulated by other ribosomal proteins, e.g. L4, L17, and L20. It is important during the early stages of 50S assembly. It makes multiple contacts with different domains of the 23S rRNA in the assembled 50S subunit and ribosome. The globular domain of the protein is located near the polypeptide exit tunnel on the outside of the subunit, while an extended beta-hairpin is found that lines the wall of the exit tunnel in the center of the 70S ribosome. In Marinomonas sp. (strain MWYL1), this protein is Large ribosomal subunit protein uL22.